Here is a 196-residue protein sequence, read N- to C-terminus: Nodulation protein A (196 aa).

The protein belongs to the NodA family.

The protein resides in the cytoplasm. Functionally, N-acyltransferase required for nodulation. Acts in the production of a small, heat-stable compound (Nod) that stimulates mitosis in various plant protoplasts. This chain is Nodulation protein A, found in Mesorhizobium sp. (strain 7653R).